The chain runs to 234 residues: Glucosamine-6-phosphate deaminase (234 aa).

Residue D62 is the Proton acceptor; for enolization step of the active site. N128 acts as the For ring-opening step in catalysis. The active-site Proton acceptor; for ring-opening step is H130. E135 serves as the catalytic For ring-opening step.

It belongs to the glucosamine/galactosamine-6-phosphate isomerase family. NagB subfamily.

It carries out the reaction alpha-D-glucosamine 6-phosphate + H2O = beta-D-fructose 6-phosphate + NH4(+). The protein operates within amino-sugar metabolism; N-acetylneuraminate degradation; D-fructose 6-phosphate from N-acetylneuraminate: step 5/5. Catalyzes the reversible isomerization-deamination of glucosamine 6-phosphate (GlcN6P) to form fructose 6-phosphate (Fru6P) and ammonium ion. This is Glucosamine-6-phosphate deaminase from Ligilactobacillus salivarius (strain UCC118) (Lactobacillus salivarius).